The chain runs to 338 residues: Ketol-acid reductoisomerase (NADP(+)) (338 aa).

The region spanning 1 to 181 is the KARI N-terminal Rossmann domain; the sequence is MNVFYDKDAD…GGGRAGIIET (181 aa). NADP(+) is bound by residues 24 to 27, arginine 47, and serine 52; that span reads YGSQ. Histidine 107 is a catalytic residue. Glycine 133 lines the NADP(+) pocket. The KARI C-terminal knotted domain maps to 182–327; that stretch reads NFREETETDL…AKLRAMMPWI (146 aa). Positions 190, 194, 226, and 230 each coordinate Mg(2+). Serine 251 is a substrate binding site.

This sequence belongs to the ketol-acid reductoisomerase family. Requires Mg(2+) as cofactor.

The enzyme catalyses (2R)-2,3-dihydroxy-3-methylbutanoate + NADP(+) = (2S)-2-acetolactate + NADPH + H(+). It carries out the reaction (2R,3R)-2,3-dihydroxy-3-methylpentanoate + NADP(+) = (S)-2-ethyl-2-hydroxy-3-oxobutanoate + NADPH + H(+). The protein operates within amino-acid biosynthesis; L-isoleucine biosynthesis; L-isoleucine from 2-oxobutanoate: step 2/4. It participates in amino-acid biosynthesis; L-valine biosynthesis; L-valine from pyruvate: step 2/4. Functionally, involved in the biosynthesis of branched-chain amino acids (BCAA). Catalyzes an alkyl-migration followed by a ketol-acid reduction of (S)-2-acetolactate (S2AL) to yield (R)-2,3-dihydroxy-isovalerate. In the isomerase reaction, S2AL is rearranged via a Mg-dependent methyl migration to produce 3-hydroxy-3-methyl-2-ketobutyrate (HMKB). In the reductase reaction, this 2-ketoacid undergoes a metal-dependent reduction by NADPH to yield (R)-2,3-dihydroxy-isovalerate. The polypeptide is Ketol-acid reductoisomerase (NADP(+)) (Burkholderia cenocepacia (strain HI2424)).